The primary structure comprises 528 residues: Tyrosine 3-monooxygenase (528 aa).

Phosphoserine; by CaMK2 is present on S19. A disordered region spans residues 33 to 65 (GQGAPGPSLTGSPWPGTAAPAASYTPTPRSPRF). The segment covering 47–59 (PGTAAPAASYTPT) has biased composition (low complexity). The residue at position 62 (S62) is a Phosphoserine. The residue at position 71 (S71) is a Phosphoserine; by CaMK2 and PKA. Residues H361, H366, and E406 each contribute to the Fe cation site. The residue at position 502 (S502) is a Phosphoserine.

This sequence belongs to the biopterin-dependent aromatic amino acid hydroxylase family. As to quaternary structure, homotetramer. Interacts (when phosphorylated at Ser-19) with YWHAG; one YWHAG dimer binds to one TH tetramer and this interaction may influence the phosphorylation and dephosphorylation of other sites. Interacts with NT5DC2; the interaction results in reduced phosphorylation and decreased catalytic activity of TH. It depends on Fe(2+) as a cofactor. In terms of processing, phosphorylated on Ser-19, Ser-62 and Ser-71 by several protein kinases with different site specificities. Phosphorylation at Ser-62 and Ser-71 leads to an increase of TH activity. Phosphorylation at Ser-71 activates the enzyme and also counteracts the feedback inhibition of TH by catecholamines. Phosphorylation of Ser-19 and Ser-62 triggers the proteasomal degradation of TH through the ubiquitin-proteasome pathway. Phosphorylation at Ser-62 facilitates transport of TH from the soma to the nerve terminals via the microtubule network. Phosphorylation at Ser-19 induces the high-affinity binding to the 14-3-3 protein YWHAG; this interaction may influence the phosphorylation and dephosphorylation of other sites. Ser-19 increases the phosphorylation at Ser-71 in a hierarchical manner, leading to increased activity. As to expression, mainly expressed in the brain and adrenal glands.

Its subcellular location is the cytoplasm. It localises to the perinuclear region. It is found in the nucleus. The protein localises to the cell projection. The protein resides in the axon. Its subcellular location is the cytoplasmic vesicle. It localises to the secretory vesicle. It is found in the synaptic vesicle. The catalysed reaction is (6R)-L-erythro-5,6,7,8-tetrahydrobiopterin + L-tyrosine + O2 = (4aS,6R)-4a-hydroxy-L-erythro-5,6,7,8-tetrahydrobiopterin + L-dopa. Its pathway is catecholamine biosynthesis; dopamine biosynthesis; dopamine from L-tyrosine: step 1/2. Inhibited in feedback fashion by the catecholamine neurotransmitters, especially by dopamine in competition with tetrahydrobiopterin. Phosphorylation of several Ser/Thr residues in the N-terminus regulates the catalytic activity. Ser-62 and Ser-71 are readily phosphorylated to activate the catalytic activity. A Cysteine modification induced by N-ethylmaleimide (NEM), inhibits tyrosine 3-monooxygenase activity through the modification of the Cys-207. Functionally, catalyzes the conversion of L-tyrosine to L-dihydroxyphenylalanine (L-Dopa), the rate-limiting step in the biosynthesis of catecholamines, dopamine, noradrenaline, and adrenaline. Uses tetrahydrobiopterin and molecular oxygen to convert tyrosine to L-Dopa. In addition to tyrosine, is able to catalyze the hydroxylation of phenylalanine and tryptophan with lower specificity. Positively regulates the regression of retinal hyaloid vessels during postnatal development. Its function is as follows. Lacks catalytic activity. This chain is Tyrosine 3-monooxygenase, found in Homo sapiens (Human).